We begin with the raw amino-acid sequence, 158 residues long: MPRKPPSSPKSSPLQLGRAVAWPDSPEQAKLDRVPNPQKGTNYVARFTAPEFTALCPVTGQPDFAHLVIDYVPGSWLLESKSLKLYLASFRNHGAFHEDCTVAIGKRIVAAIKPKWLRIGGYWFPRGGIPIDVFWQTGAAPRGVWIPDQDVPSYRGRG.

C56 functions as the Thioimide intermediate in the catalytic mechanism. Catalysis depends on D63, which acts as the Proton donor. Residues 78–80 (LES) and 97–98 (HE) each bind substrate.

This sequence belongs to the GTP cyclohydrolase I family. QueF type 1 subfamily.

The protein resides in the cytoplasm. The enzyme catalyses 7-aminomethyl-7-carbaguanine + 2 NADP(+) = 7-cyano-7-deazaguanine + 2 NADPH + 3 H(+). Its pathway is tRNA modification; tRNA-queuosine biosynthesis. Catalyzes the NADPH-dependent reduction of 7-cyano-7-deazaguanine (preQ0) to 7-aminomethyl-7-deazaguanine (preQ1). This is NADPH-dependent 7-cyano-7-deazaguanine reductase from Nitrobacter winogradskyi (strain ATCC 25391 / DSM 10237 / CIP 104748 / NCIMB 11846 / Nb-255).